The primary structure comprises 564 residues: NAD-dependent malic enzyme (564 aa).

The active-site Proton donor is tyrosine 102. Arginine 155 is a binding site for NAD(+). Lysine 173 functions as the Proton acceptor in the catalytic mechanism. A divalent metal cation contacts are provided by glutamate 244, aspartate 245, and aspartate 268. Positions 268 and 417 each coordinate NAD(+).

Belongs to the malic enzymes family. As to quaternary structure, homotetramer. Mg(2+) is required as a cofactor. Requires Mn(2+) as cofactor.

It carries out the reaction (S)-malate + NAD(+) = pyruvate + CO2 + NADH. It catalyses the reaction oxaloacetate + H(+) = pyruvate + CO2. The sequence is that of NAD-dependent malic enzyme from Pseudomonas aeruginosa (strain ATCC 15692 / DSM 22644 / CIP 104116 / JCM 14847 / LMG 12228 / 1C / PRS 101 / PAO1).